The chain runs to 57 residues: Lantibiotic nukacin (57 aa).

A propeptide spanning residues 1-30 is cleaved from the precursor; the sequence is MENSKVMKDIEVANLLEEVQEDELNEVLGA. Residues 39–44 constitute a cross-link (beta-methyllanthionine (Thr-Cys)); it reads TVSHDC. 2 cross-links (lanthionine (Ser-Cys)) span residues 41–55 and 48–56; these read SHDCHMNSFQFVFTC and SFQFVFTCC. A 2,3-didehydrobutyrine modification is found at Thr54.

Post-translationally, maturation of lantibiotics involves the enzymatic conversion of Thr, and Ser into dehydrated AA and the formation of thioether bonds with cysteine. This is followed by membrane translocation and cleavage of the modified precursor.

Its subcellular location is the secreted. In terms of biological role, lanthionine-containing peptide antibiotic (lantibiotic) active on Gram-positive bacteria. The bactericidal activity of lantibiotics is based on depolarization of energized bacterial cytoplasmic membranes, initiated by the formation of aqueous transmembrane pores. In Staphylococcus simulans, this protein is Lantibiotic nukacin.